The chain runs to 252 residues: 2-succinyl-6-hydroxy-2,4-cyclohexadiene-1-carboxylate synthase (252 aa).

Belongs to the AB hydrolase superfamily. MenH family. As to quaternary structure, monomer.

The enzyme catalyses 5-enolpyruvoyl-6-hydroxy-2-succinyl-cyclohex-3-ene-1-carboxylate = (1R,6R)-6-hydroxy-2-succinyl-cyclohexa-2,4-diene-1-carboxylate + pyruvate. It functions in the pathway quinol/quinone metabolism; 1,4-dihydroxy-2-naphthoate biosynthesis; 1,4-dihydroxy-2-naphthoate from chorismate: step 3/7. Its pathway is quinol/quinone metabolism; menaquinone biosynthesis. In terms of biological role, catalyzes a proton abstraction reaction that results in 2,5-elimination of pyruvate from 2-succinyl-5-enolpyruvyl-6-hydroxy-3-cyclohexene-1-carboxylate (SEPHCHC) and the formation of 2-succinyl-6-hydroxy-2,4-cyclohexadiene-1-carboxylate (SHCHC). The polypeptide is 2-succinyl-6-hydroxy-2,4-cyclohexadiene-1-carboxylate synthase (Escherichia coli O7:K1 (strain IAI39 / ExPEC)).